The sequence spans 449 residues: 23S rRNA (uracil(1939)-C(5))-methyltransferase RlmD (449 aa).

Residues 12-70 (SKQLSAKQSFSVHQLDHLGAGIAQHQGKVVFIPGALPNETVQAQLTEQKKNYARAKLIK) enclose the TRAM domain. [4Fe-4S] cluster contacts are provided by cysteine 83, cysteine 89, cysteine 92, and cysteine 170. Residues glutamine 282, phenylalanine 311, asparagine 316, glutamate 332, aspartate 359, and aspartate 379 each contribute to the S-adenosyl-L-methionine site. The active-site Nucleophile is cysteine 405.

This sequence belongs to the class I-like SAM-binding methyltransferase superfamily. RNA M5U methyltransferase family. RlmD subfamily.

The catalysed reaction is uridine(1939) in 23S rRNA + S-adenosyl-L-methionine = 5-methyluridine(1939) in 23S rRNA + S-adenosyl-L-homocysteine + H(+). Its function is as follows. Catalyzes the formation of 5-methyl-uridine at position 1939 (m5U1939) in 23S rRNA. This chain is 23S rRNA (uracil(1939)-C(5))-methyltransferase RlmD, found in Shewanella sp. (strain ANA-3).